The following is a 599-amino-acid chain: UvrABC system protein C (599 aa).

Residues 13 to 91 enclose the GIY-YIG domain; the sequence is NLPGVYRMIN…IKGFMPRYNV (79 aa). In terms of domain architecture, UVR spans 200-235; the sequence is QQVMDELGEKMNEAAEKMEYELAAVYRDRIQSLRQV.

The protein belongs to the UvrC family. Interacts with UvrB in an incision complex.

Its subcellular location is the cytoplasm. In terms of biological role, the UvrABC repair system catalyzes the recognition and processing of DNA lesions. UvrC both incises the 5' and 3' sides of the lesion. The N-terminal half is responsible for the 3' incision and the C-terminal half is responsible for the 5' incision. This chain is UvrABC system protein C, found in Methylobacillus flagellatus (strain ATCC 51484 / DSM 6875 / VKM B-1610 / KT).